The sequence spans 451 residues: tRNA-2-methylthio-N(6)-dimethylallyladenosine synthase (451 aa).

The MTTase N-terminal domain occupies 1 to 116 (MTYFFETYGC…LPQIFDEIKA (116 aa)). Residues Cys-10, Cys-46, Cys-79, Cys-162, Cys-166, and Cys-169 each contribute to the [4Fe-4S] cluster site. One can recognise a Radical SAM core domain in the interval 148–384 (SPKSFQSYVP…IDLQLKITAK (237 aa)). Residues 387-451 (KAKLGKKVDI…KGKTFRANLN (65 aa)) enclose the TRAM domain.

The protein belongs to the methylthiotransferase family. MiaB subfamily. As to quaternary structure, monomer. Requires [4Fe-4S] cluster as cofactor.

The protein localises to the cytoplasm. The catalysed reaction is N(6)-dimethylallyladenosine(37) in tRNA + (sulfur carrier)-SH + AH2 + 2 S-adenosyl-L-methionine = 2-methylsulfanyl-N(6)-dimethylallyladenosine(37) in tRNA + (sulfur carrier)-H + 5'-deoxyadenosine + L-methionine + A + S-adenosyl-L-homocysteine + 2 H(+). Catalyzes the methylthiolation of N6-(dimethylallyl)adenosine (i(6)A), leading to the formation of 2-methylthio-N6-(dimethylallyl)adenosine (ms(2)i(6)A) at position 37 in tRNAs that read codons beginning with uridine. The protein is tRNA-2-methylthio-N(6)-dimethylallyladenosine synthase of Treponema denticola (strain ATCC 35405 / DSM 14222 / CIP 103919 / JCM 8153 / KCTC 15104).